Here is an 837-residue protein sequence, read N- to C-terminus: Intestinal mucin-like protein (837 aa).

Tandem repeats lie at residues 17–27 (PSTPSTPPPST), 28–38 (PTTPTSSQTTT), 39–50 (PSTPSTTSSKST), and 51–62 (PSTPQSTSSKST). The segment at 17–70 (PSTPSTPPPSTPTTPTSSQTTTPSTPSTTSSKSTPSTPQSTSSKSTPSTPPKTT) is 5 X 11 AA approximate tandem repeats. The tract at residues 17–75 (PSTPSTPPPSTPTTPTSSQTTTPSTPSTTSSKSTPSTPQSTSSKSTPSTPPKTTLPGCL) is disordered. Residues 29-70 (TTPTSSQTTTPSTPSTTSSKSTPSTPQSTSSKSTPSTPPKTT) show a composition bias toward low complexity. The 5; truncated repeat unit spans residues 63–70 (PSTPPKTT). N91 and N164 each carry an N-linked (GlcNAc...) asparagine glycan. Positions 141–324 (CYCTGWGDPH…VNDPSKPHCP (184 aa)) constitute a VWFD domain. 3 cysteine pairs are disulfide-bonded: C143-C284, C165-C323, and C189-C197. The tract at residues 149-837 (PHFVTFDGLY…RSSPRLLGRK (689 aa)) is probably important for disulfide-bond mediated mucin polymerization (link domain). N-linked (GlcNAc...) asparagine glycans are attached at residues N278, N289, N344, N410, N444, N515, N538, N612, N627, N695, N727, and N749. VWFC domains lie at 472-543 (CGCV…TSCK) and 581-648 (GVCV…KKCQ). 4 disulfide bridges follow: C732-C779, C746-C793, C755-C809, and C759-C811. One can recognise a CTCK domain in the interval 732–817 (CSAIPVMKEI…SCLCQGTVCE (86 aa)).

In terms of assembly, multimeric. Coats the epithelia of the intestines.

The protein resides in the secreted. The protein is Intestinal mucin-like protein of Rattus norvegicus (Rat).